Consider the following 203-residue polypeptide: Calcineurin B-like protein 5 (203 aa).

A lipid anchor (N-myristoyl glycine) is attached at G2. EF-hand domains lie at 30 to 65, 66 to 101, 103 to 138, and 147 to 182; these read EVEVLHGLFIKLTSCLSNDNLLTKEKFQFILIKNTK, KRSLSAERIFGLFDMRNDGAIDFGEFVHTLNIFHPN, SPRDKAIFAFRLYDTRETGFIEPEEVKEMIIDVLEE, and IIDSIVSKTFEEADWKKDGIIDLEEWENFVATYPLT.

The protein belongs to the calcineurin regulatory subunit family. In terms of assembly, homodimer. Interacts with PP2CA, CIPK2, CIPK11, CIPK23 and CIPK24. In terms of processing, both N-myristoylation and calcium-mediated conformational changes are essential for its function. In terms of tissue distribution, expressed in green tissues, but not in the roots.

It localises to the cytoplasm. The protein resides in the nucleus. In terms of biological role, acts as a calcium sensor. CBL proteins interact with CIPK serine-threonine protein kinases. Binding of a CBL protein to the regulatory NAF domain of a CIPK protein lead to the activation of the kinase in a calcium-dependent manner. May function as a positive regulator of salt or drought responses. The chain is Calcineurin B-like protein 5 (CBL5) from Arabidopsis thaliana (Mouse-ear cress).